A 664-amino-acid chain; its full sequence is uncharacterized protein (664 aa).

The first 25 residues, 1–25, serve as a signal peptide directing secretion; it reads MSWKRYLKWVSFAIIPLLFANTSIK. A helical transmembrane segment spans residues 625-645; sequence IIVYLIIGFSVLVLFITVFIY.

This sequence belongs to the MG414/MG415 family.

It is found in the cell membrane. This is an uncharacterized protein from Mycoplasma genitalium (strain ATCC 33530 / DSM 19775 / NCTC 10195 / G37) (Mycoplasmoides genitalium).